A 591-amino-acid chain; its full sequence is MCGILAVLGVADVSLAKRSRIIELSRRLRHRGPDWSGIHCYQDCYLAHQRLAIVDPTSGDQPLYNEDKSVVVTVNGEIYNHEELKANLKSHKFQTASDCEVIAHLYEEYGEEFVDMLDGMFAFVLLDTRDKSFIAARDAIGICPLYMGWGLDGSVWFSSEMKALSDDCERFISFPPGHLYSSKTGGLRRWYNPPWFSESIPSTPYNPLLLRQSFEKAIIKRLMTDVPFGVLLSGGLDSSLVASVVSRHLAEAKVAAQWGNKLHTFCIGLKGSPDLRAAKEVADYLGTVHHELHFTVQEGIDALEEVIYHVETYDVTTIRASTPMFLMSRKIKSLGVKMVLSGEGSDEIFGGYLYFHKAPNKKEFHEETCRKIKALHLYDCLRANKSTSAWGVEARVPFLDKNFINVAMDIDPEWKMIKRDLGRIEKWVLRNAFDDEEKPYLPKHILYRQKEQFSDGVGYSWIDGLKDHANEHVSDSMMMNASFVYPENTPVTKEAYYYRTIFEKFFPKNAARLTVPGGPSVACSTAKAVEWDAAWSKNLDPSGRAALGVHDAAYEDTLQKSPASANPVLDNGFGPALGESMVKTVASATAV.

Catalysis depends on Cys-2, which acts as the For GATase activity. Residues 2-185 (CGILAVLGVA…PGHLYSSKTG (184 aa)) form the Glutamine amidotransferase type-2 domain. Residues 50 to 54 (RLAIV), 75 to 77 (NGE), and Asp-98 contribute to the L-glutamine site. Positions 193–516 (PPWFSESIPS…PKNAARLTVP (324 aa)) constitute an Asparagine synthetase domain. Residues Leu-231, Ile-267, and 341–342 (SG) each bind ATP.

As to expression, expressed in companion cells of leaf sheath vascular bundles, and phloem-parenchyma cells, nucellar projections and nucellar epidermis of dorsal vascular bundles of grains.

The catalysed reaction is L-aspartate + L-glutamine + ATP + H2O = L-asparagine + L-glutamate + AMP + diphosphate + H(+). Its pathway is amino-acid biosynthesis; L-asparagine biosynthesis; L-asparagine from L-aspartate (L-Gln route): step 1/1. Functionally, essential for nitrogen assimilation, distribution and remobilization within the plant via the phloem. This is Asparagine synthetase [glutamine-hydrolyzing] 2 from Oryza sativa subsp. japonica (Rice).